The chain runs to 477 residues: RNA pseudouridine synthase 6, chloroplastic (477 aa).

The transit peptide at 1–52 (MPKAAASLASLLPQLWHRPVQPPPFLHRALSSSSPLLRRHRAALHSPAAPLS) directs the protein to the chloroplast. The 108-residue stretch at 98–205 (EVAVDFISRS…FPRCYEIDWK (108 aa)) folds into the S4 RNA-binding domain. Aspartate 258 is a catalytic residue.

This sequence belongs to the pseudouridine synthase RluA family.

The protein resides in the plastid. It is found in the chloroplast. The enzyme catalyses a uridine in RNA = a pseudouridine in RNA. In Oryza sativa subsp. japonica (Rice), this protein is RNA pseudouridine synthase 6, chloroplastic.